The following is a 341-amino-acid chain: Methionine import ATP-binding protein MetN 1 (341 aa).

An ABC transporter domain is found at 2–241 (IKLNQIVKRY…PQHEVTKRFV (240 aa)). Residue 38–45 (GFSGAGKS) participates in ATP binding.

This sequence belongs to the ABC transporter superfamily. Methionine importer (TC 3.A.1.24) family. The complex is composed of two ATP-binding proteins (MetN), two transmembrane proteins (MetI) and a solute-binding protein (MetQ).

The protein resides in the cell membrane. The enzyme catalyses L-methionine(out) + ATP + H2O = L-methionine(in) + ADP + phosphate + H(+). It carries out the reaction D-methionine(out) + ATP + H2O = D-methionine(in) + ADP + phosphate + H(+). Part of the ABC transporter complex MetNIQ involved in methionine import. Responsible for energy coupling to the transport system. The polypeptide is Methionine import ATP-binding protein MetN 1 (Staphylococcus epidermidis (strain ATCC 12228 / FDA PCI 1200)).